The primary structure comprises 316 residues: tRNA methyltransferase 10 homolog B (316 aa).

Positions 73–98 form a coiled coil; that stretch reads EKIVAAKKSKRKQEKERRKANRVENS. The segment at 77–96 is disordered; sequence AAKKSKRKQEKERRKANRVE. The 198-residue stretch at 113 to 310 folds into the SAM-dependent MTase TRM10-type domain; it reads IKERLLEAKH…KGVSSRKGYV (198 aa).

This sequence belongs to the class IV-like SAM-binding methyltransferase superfamily. TRM10 family.

The catalysed reaction is guanosine(9) in tRNA + S-adenosyl-L-methionine = N(1)-methylguanosine(9) in tRNA + S-adenosyl-L-homocysteine + H(+). Functionally, S-adenosyl-L-methionine-dependent guanine N(1)-methyltransferase that catalyzes the formation of N(1)-methylguanine at position 9 (m1G9) in tRNAs. Probably not able to catalyze formation of N(1)-methyladenine at position 9 (m1A9) in tRNAs. This chain is tRNA methyltransferase 10 homolog B (TRMT10B), found in Bos taurus (Bovine).